We begin with the raw amino-acid sequence, 266 residues long: Glucosamine-6-phosphate deaminase (266 aa).

Aspartate 72 acts as the Proton acceptor; for enolization step in catalysis. Catalysis depends on aspartate 141, which acts as the For ring-opening step. Catalysis depends on histidine 143, which acts as the Proton acceptor; for ring-opening step. The For ring-opening step role is filled by glutamate 148.

The protein belongs to the glucosamine/galactosamine-6-phosphate isomerase family. NagB subfamily. Homohexamer.

It carries out the reaction alpha-D-glucosamine 6-phosphate + H2O = beta-D-fructose 6-phosphate + NH4(+). The protein operates within amino-sugar metabolism; N-acetylneuraminate degradation; D-fructose 6-phosphate from N-acetylneuraminate: step 5/5. Its activity is regulated as follows. Allosterically activated by N-acetylglucosamine 6-phosphate (GlcNAc6P). In terms of biological role, catalyzes the reversible isomerization-deamination of glucosamine 6-phosphate (GlcN6P) to form fructose 6-phosphate (Fru6P) and ammonium ion. This chain is Glucosamine-6-phosphate deaminase, found in Vibrio campbellii (strain ATCC BAA-1116).